The chain runs to 157 residues: Immediate-early protein ICP-18 (157 aa).

The polypeptide is Immediate-early protein ICP-18 (Frog virus 3 (isolate Goorha) (FV-3)).